A 93-amino-acid polypeptide reads, in one-letter code: UPF0298 protein LMHCC_0506 (93 aa).

This sequence belongs to the UPF0298 family.

It localises to the cytoplasm. The protein is UPF0298 protein LMHCC_0506 of Listeria monocytogenes serotype 4a (strain HCC23).